We begin with the raw amino-acid sequence, 631 residues long: Mitochondrial Rho GTPase 1 (631 aa).

Residues 1 to 605 are Cytoplasmic-facing; sequence MPAGRGRPLR…TQADLKSSTF (605 aa). The 167-residue stretch at 15 to 181 folds into the Miro 1 domain; it reads KKDVRILLVG…FYYAQKAVLH (167 aa). 5 residues coordinate GTP: arginine 27, glycine 29, lysine 30, threonine 31, and serine 32. A Mg(2+)-binding site is contributed by threonine 31. Mg(2+)-binding residues include proline 48 and aspartate 70. GTP is bound at residue serine 72. The residue at position 105 (lysine 105) is an N6-acetyllysine. Residues asparagine 131, lysine 132, aspartate 134, alanine 162, and lysine 163 each contribute to the GTP site. Lysine 166 participates in a covalent cross-link: Glycyl lysine isopeptide (Lys-Gly) (interchain with G-Cter in ubiquitin). Positions 197–232 constitute an EF-hand 1 domain; it reads ACIKALTRIFKISDQDNDGTLNDAELNFFQRICFNT. Ca(2+)-binding residues include aspartate 210, aspartate 212, aspartate 214, threonine 216, and glutamate 221. Lysine 248 participates in a covalent cross-link: Glycyl lysine isopeptide (Lys-Gly) (interchain with G-Cter in ubiquitin). An EF-hand 2 domain is found at 317–352; that stretch reads HAYLFLQSTFDKHDLDRDCALSPDELKDLFKVFPYI. Aspartate 330, aspartate 332, aspartate 334, alanine 336, and glutamate 341 together coordinate Ca(2+). Residues 429–592 enclose the Miro 2 domain; sequence RNVFRCNVIG…FVKLTTMAMY (164 aa). Residues asparagine 441, cysteine 442, glycine 443, lysine 444, serine 445, glycine 446, lysine 460, lysine 541, aspartate 543, threonine 571, and cysteine 572 each coordinate GTP. Asparagine 441 contacts Mg(2+). Lysine 585 is covalently cross-linked (Glycyl lysine isopeptide (Lys-Gly) (interchain with G-Cter in ubiquitin)). A helical; Anchor for type IV membrane protein transmembrane segment spans residues 606 to 628; the sequence is WLRASFGATVFAVLGFAMYKALL. Over 629-631 the chain is Mitochondrial intermembrane; that stretch reads KQR.

Belongs to the mitochondrial Rho GTPase family. In terms of assembly, homodimer. Interacts with the kinesin-binding proteins TRAK1/OIP106 and TRAK2/GRIF1, forming a link between mitochondria and the trafficking apparatus of the microtubules. Interacts with RAP1GDS1. Interacts with ARMCX1. Found in a complex with KIF5B, OGT, RHOT2 and TRAK1. Ubiquitinated by PRKN during mitophagy, leading to its degradation and enhancement of mitophagy. Deubiquitinated by USP30. Post-translationally, acetylation on Lys-105 decreases sensitivity of mitochondrial transport to elevated Ca(2+) levels, increases mitochondrial transport and promotes axon growth. Deacetylated by HDAC6 which blocks mitochondrial transport and mediates axon growth inhibition.

It localises to the mitochondrion outer membrane. It carries out the reaction GTP + H2O = GDP + phosphate + H(+). The enzyme catalyses ATP + H2O = ADP + phosphate + H(+). The catalysed reaction is UTP + H2O = UDP + phosphate + H(+). In terms of biological role, atypical mitochondrial nucleoside-triphosphatase (NTPase) involved in mitochondrial trafficking. Probably involved in control of anterograde transport of mitochondria and their subcellular distribution. Promotes mitochondrial fission during high calcium conditions. Can hydrolyze GTP, ATP and UTP. In Bos taurus (Bovine), this protein is Mitochondrial Rho GTPase 1 (RHOT1).